Here is a 514-residue protein sequence, read N- to C-terminus: Cardiolipin synthase 2 (514 aa).

Transmembrane regions (helical) follow at residues 7 to 27, 41 to 61, and 71 to 91; these read LIFF…FIDV, ILGI…CVIF, and LTWL…YLLF. PLD phosphodiesterase domains follow at residues 249 to 276 and 427 to 454; these read INYR…GDEY and EKGF…DMRS. Residues histidine 254, lysine 256, aspartate 261, histidine 432, lysine 434, and aspartate 439 contribute to the active site.

Belongs to the phospholipase D family. Cardiolipin synthase subfamily.

It localises to the cell membrane. It catalyses the reaction 2 a 1,2-diacyl-sn-glycero-3-phospho-(1'-sn-glycerol) = a cardiolipin + glycerol. Its function is as follows. Catalyzes the reversible phosphatidyl group transfer from one phosphatidylglycerol molecule to another to form cardiolipin (CL) (diphosphatidylglycerol) and glycerol. The chain is Cardiolipin synthase 2 (cls2) from Bacillus cereus (strain ATCC 14579 / DSM 31 / CCUG 7414 / JCM 2152 / NBRC 15305 / NCIMB 9373 / NCTC 2599 / NRRL B-3711).